The sequence spans 209 residues: Large ribosomal subunit protein uL3 (209 aa).

Position 150 is an N5-methylglutamine (glutamine 150).

The protein belongs to the universal ribosomal protein uL3 family. In terms of assembly, part of the 50S ribosomal subunit. Forms a cluster with proteins L14 and L19. In terms of processing, methylated by PrmB.

Its function is as follows. One of the primary rRNA binding proteins, it binds directly near the 3'-end of the 23S rRNA, where it nucleates assembly of the 50S subunit. The polypeptide is Large ribosomal subunit protein uL3 (Escherichia coli O139:H28 (strain E24377A / ETEC)).